A 102-amino-acid polypeptide reads, in one-letter code: Aspartyl/glutamyl-tRNA(Asn/Gln) amidotransferase subunit C (102 aa).

This sequence belongs to the GatC family. In terms of assembly, heterotrimer of A, B and C subunits.

The catalysed reaction is L-glutamyl-tRNA(Gln) + L-glutamine + ATP + H2O = L-glutaminyl-tRNA(Gln) + L-glutamate + ADP + phosphate + H(+). The enzyme catalyses L-aspartyl-tRNA(Asn) + L-glutamine + ATP + H2O = L-asparaginyl-tRNA(Asn) + L-glutamate + ADP + phosphate + 2 H(+). Its function is as follows. Allows the formation of correctly charged Asn-tRNA(Asn) or Gln-tRNA(Gln) through the transamidation of misacylated Asp-tRNA(Asn) or Glu-tRNA(Gln) in organisms which lack either or both of asparaginyl-tRNA or glutaminyl-tRNA synthetases. The reaction takes place in the presence of glutamine and ATP through an activated phospho-Asp-tRNA(Asn) or phospho-Glu-tRNA(Gln). The chain is Aspartyl/glutamyl-tRNA(Asn/Gln) amidotransferase subunit C from Mycobacteroides abscessus (strain ATCC 19977 / DSM 44196 / CCUG 20993 / CIP 104536 / JCM 13569 / NCTC 13031 / TMC 1543 / L948) (Mycobacterium abscessus).